Here is a 658-residue protein sequence, read N- to C-terminus: Carnitine O-palmitoyltransferase 2, mitochondrial (658 aa).

The transit peptide at 1–25 (MMPRLLFRAWPRCPSLVLGAPSRPL) directs the protein to the mitochondrion. Residues 26–178 (SAVSGPDDYL…GLLEPEVFHL (153 aa)) lie on the Mitochondrial matrix side of the membrane. Residues K69 and K85 each carry the N6-succinyllysine modification. The segment at residues 179–208 (NPSKSDTDAFKRLIRFVPPSLSWYGAYLVN) is an intramembrane region (note=Mitochondrial inner membrane). Topologically, residues 209 to 658 (AYPLDMSQYF…DALEGKAIKT (450 aa)) are mitochondrial matrix. K239 is subject to N6-acetyllysine; alternate. The residue at position 239 (K239) is an N6-succinyllysine; alternate. K305 carries the post-translational modification N6-acetyllysine. H372 acts as the Proton acceptor in catalysis. N6-succinyllysine is present on residues K424 and K439. CoA is bound at residue 452–464 (GKEFLKKKQLSPD). Residues Y486, S488, and T499 each contribute to the (R)-carnitine site. N6-acetyllysine; alternate is present on residues K510 and K544. 2 positions are modified to N6-succinyllysine; alternate: K510 and K544.

This sequence belongs to the carnitine/choline acetyltransferase family.

It is found in the mitochondrion inner membrane. The catalysed reaction is (R)-carnitine + hexadecanoyl-CoA = O-hexadecanoyl-(R)-carnitine + CoA. It carries out the reaction octanoyl-CoA + (R)-carnitine = O-octanoyl-(R)-carnitine + CoA. It catalyses the reaction decanoyl-CoA + (R)-carnitine = O-decanoyl-(R)-carnitine + CoA. The enzyme catalyses dodecanoyl-CoA + (R)-carnitine = O-dodecanoyl-R-carnitine + CoA. The catalysed reaction is tetradecanoyl-CoA + (R)-carnitine = O-tetradecanoyl-(R)-carnitine + CoA. It carries out the reaction (R)-carnitine + octadecanoyl-CoA = O-octadecanoyl-(R)-carnitine + CoA. It catalyses the reaction eicosanoyl-CoA + (R)-carnitine = O-eicosanoyl-(R)-carnitine + CoA. The enzyme catalyses (9Z)-tetradecenoyl-CoA + (R)-carnitine = O-(9Z)-tetradecenoyl-(R)-carnitine + CoA. The catalysed reaction is (5Z)-tetradecenoyl-CoA + (R)-carnitine = O-(5Z)-tetradecenoyl-(R)-carnitine + CoA. It carries out the reaction (R)-carnitine + (9Z)-octadecenoyl-CoA = O-(9Z)-octadecenoyl-(R)-carnitine + CoA. It catalyses the reaction 4,8-dimethylnonanoyl-CoA + (R)-carnitine = O-4,8-dimethylnonanoyl-(R)-carnitine + CoA. It functions in the pathway lipid metabolism; fatty acid beta-oxidation. Its function is as follows. Involved in the intramitochondrial synthesis of acylcarnitines from accumulated acyl-CoA metabolites. Reconverts acylcarnitines back into the respective acyl-CoA esters that can then undergo beta-oxidation, an essential step for the mitochondrial uptake of long-chain fatty acids and their subsequent beta-oxidation in the mitochondrion. Active with medium (C8-C12) and long-chain (C14-C18) acyl-CoA esters. This Rattus norvegicus (Rat) protein is Carnitine O-palmitoyltransferase 2, mitochondrial.